The following is a 453-amino-acid chain: tRNA modification GTPase MnmE (453 aa).

(6S)-5-formyl-5,6,7,8-tetrahydrofolate contacts are provided by R22, E79, and K119. One can recognise a TrmE-type G domain in the interval 215 to 376; sequence GMKVVIAGRP…LREHLKACMG (162 aa). N225 contributes to the K(+) binding site. GTP-binding positions include 225–230, 244–250, 269–272, and 334–337; these read NAGKSS, TEIAGTT, DTAG, and NKAD. S229 is a binding site for Mg(2+). Residues T244, I246, and T249 each contribute to the K(+) site. T250 is a Mg(2+) binding site. K453 is a (6S)-5-formyl-5,6,7,8-tetrahydrofolate binding site.

It belongs to the TRAFAC class TrmE-Era-EngA-EngB-Septin-like GTPase superfamily. TrmE GTPase family. In terms of assembly, homodimer. Heterotetramer of two MnmE and two MnmG subunits. K(+) serves as cofactor.

It localises to the cytoplasm. Functionally, exhibits a very high intrinsic GTPase hydrolysis rate. Involved in the addition of a carboxymethylaminomethyl (cmnm) group at the wobble position (U34) of certain tRNAs, forming tRNA-cmnm(5)s(2)U34. This chain is tRNA modification GTPase MnmE, found in Aeromonas hydrophila subsp. hydrophila (strain ATCC 7966 / DSM 30187 / BCRC 13018 / CCUG 14551 / JCM 1027 / KCTC 2358 / NCIMB 9240 / NCTC 8049).